Here is a 203-residue protein sequence, read N- to C-terminus: Glycerol-3-phosphate acyltransferase (203 aa).

The next 5 helical transmembrane spans lie at 13-33, 66-86, 88-108, 118-138, and 156-176; these read TLAC…LILT, TLLL…LWGV, AGMA…WLSF, IGVL…AWLA, and IIPV…FAVM.

This sequence belongs to the PlsY family. Probably interacts with PlsX.

The protein resides in the cell inner membrane. The enzyme catalyses an acyl phosphate + sn-glycerol 3-phosphate = a 1-acyl-sn-glycero-3-phosphate + phosphate. Its pathway is lipid metabolism; phospholipid metabolism. In terms of biological role, catalyzes the transfer of an acyl group from acyl-phosphate (acyl-PO(4)) to glycerol-3-phosphate (G3P) to form lysophosphatidic acid (LPA). This enzyme utilizes acyl-phosphate as fatty acyl donor, but not acyl-CoA or acyl-ACP. The sequence is that of Glycerol-3-phosphate acyltransferase from Sinorhizobium medicae (strain WSM419) (Ensifer medicae).